A 426-amino-acid chain; its full sequence is Glutamate-1-semialdehyde 2,1-aminomutase (426 aa).

The residue at position 265 (Lys-265) is an N6-(pyridoxal phosphate)lysine.

This sequence belongs to the class-III pyridoxal-phosphate-dependent aminotransferase family. HemL subfamily. In terms of assembly, homodimer. Pyridoxal 5'-phosphate is required as a cofactor.

Its subcellular location is the cytoplasm. It catalyses the reaction (S)-4-amino-5-oxopentanoate = 5-aminolevulinate. The protein operates within porphyrin-containing compound metabolism; protoporphyrin-IX biosynthesis; 5-aminolevulinate from L-glutamyl-tRNA(Glu): step 2/2. The chain is Glutamate-1-semialdehyde 2,1-aminomutase from Salmonella newport (strain SL254).